We begin with the raw amino-acid sequence, 321 residues long: Secreted RxLR effector protein 71 (321 aa).

An N-terminal signal peptide occupies residues 1 to 23 (MRPTGWRWPVLSLLLVLLPFQAA). A RxLR motif is present at residues 84–87 (RSLR). A glycan (N-linked (GlcNAc...) asparagine) is linked at N114. The interval 210 to 237 (VSLGRDGNGPVRGISSSPTRLTRPRMGG) is disordered.

This sequence belongs to the RxLR effector family.

It localises to the secreted. Its subcellular location is the host cell. Functionally, secreted effector that partially suppresses the host cell death induced by cell death-inducing proteins. This chain is Secreted RxLR effector protein 71, found in Plasmopara viticola (Downy mildew of grapevine).